A 331-amino-acid chain; its full sequence is 6-phosphogluconolactonase (331 aa).

At K287 the chain carries N6-acetyllysine.

Belongs to the cycloisomerase 2 family.

It catalyses the reaction 6-phospho-D-glucono-1,5-lactone + H2O = 6-phospho-D-gluconate + H(+). The protein operates within carbohydrate degradation; pentose phosphate pathway; D-ribulose 5-phosphate from D-glucose 6-phosphate (oxidative stage): step 2/3. Functionally, catalyzes the hydrolysis of 6-phosphogluconolactone to 6-phosphogluconate. In Escherichia fergusonii (strain ATCC 35469 / DSM 13698 / CCUG 18766 / IAM 14443 / JCM 21226 / LMG 7866 / NBRC 102419 / NCTC 12128 / CDC 0568-73), this protein is 6-phosphogluconolactonase.